Here is a 152-residue protein sequence, read N- to C-terminus: Large ribosomal subunit protein eL14 (152 aa).

It belongs to the eukaryotic ribosomal protein eL14 family.

The sequence is that of Large ribosomal subunit protein eL14 (RPL14) from Lumbricus rubellus (Humus earthworm).